A 559-amino-acid chain; its full sequence is Berberine bridge enzyme-like A (559 aa).

The first 21 residues, 1-21 (MFPLIILISFSLASLSETATG), serve as a signal peptide directing secretion. 2 N-linked (GlcNAc...) asparagine glycosylation sites follow: Asn25 and Asn37. Cys29 and Cys86 are oxidised to a cystine. Positions 64–240 (FMPKPTFIIL…YAWKIRLLKV (177 aa)) constitute an FAD-binding PCMH-type domain. At His101 the chain carries Pros-8alpha-FAD histidine. N-linked (GlcNAc...) asparagine glycosylation is found at Asn321, Asn355, and Asn494.

This sequence belongs to the oxygen-dependent FAD-linked oxidoreductase family. It depends on FAD as a cofactor. As to expression, mostly expressed in roots.

It is found in the vacuole. It participates in alkaloid biosynthesis; nicotine biosynthesis. Its function is as follows. Involved in the biosynthesis of pyridine alkaloid natural products, leading mainly to the production of anabasine, anatabine, nicotine and nornicotine, effective deterrents against herbivores with antiparasitic and pesticide properties (neurotoxins); nornicotine serves as the precursor in the synthesis of the carcinogen compound N'-nitrosonornicotine (NNN). Catalyzes a late oxidation step subsequent to the pyridine ring condensation reaction in the biosynthesis of alkaloids. The chain is Berberine bridge enzyme-like A from Nicotiana tabacum (Common tobacco).